The chain runs to 109 residues: A-type ATP synthase subunit F (109 aa).

Belongs to the V-ATPase F subunit family. As to quaternary structure, has multiple subunits with at least A(3), B(3), C, D, E, F, H, I and proteolipid K(x).

Its subcellular location is the cell membrane. In terms of biological role, component of the A-type ATP synthase that produces ATP from ADP in the presence of a proton gradient across the membrane. This Halorubrum lacusprofundi (strain ATCC 49239 / DSM 5036 / JCM 8891 / ACAM 34) protein is A-type ATP synthase subunit F.